The primary structure comprises 388 residues: UTP--glucose-1-phosphate uridylyltransferase (388 aa).

D118 lines the Mg(2+) pocket.

It belongs to the CugP-type UDP-glucose pyrophosphorylase family. The cofactor is Mg(2+).

It catalyses the reaction alpha-D-glucose 1-phosphate + UTP + H(+) = UDP-alpha-D-glucose + diphosphate. Its function is as follows. Catalyzes the formation of UDP-glucose, from UTP and glucose 1-phosphate. Is highly specific since it cannot use other NTPs such as dTTP, CTP, ATP, and GTP, and other sugar-1P such as GlcNAc-1P, Gal-1P, and Man-1P, as substrates. Has probably a central and essential role as the substrate supplier for galactolipid synthesis; galactolipids are major constituents of the photosynthetic thylakoid membrane and important for photosynthetic activity. This is UTP--glucose-1-phosphate uridylyltransferase from Synechocystis sp. (strain ATCC 27184 / PCC 6803 / Kazusa).